The sequence spans 637 residues: Sterol 3-beta-glucosyltransferase UGT80A2 (637 aa).

Disordered stretches follow at residues 1-29 and 66-112; these read MPEISPAELAKVSSSSSSSSSSSSGRASV and VAES…TERQ. Positions 13-24 are enriched in low complexity; that stretch reads SSSSSSSSSSSS. Positions 67–79 are enriched in polar residues; it reads AESSGTGNKSFSR. Positions 103–112 are enriched in basic and acidic residues; it reads RLDKSKTERQ.

It belongs to the glycosyltransferase 28 family. In terms of tissue distribution, expressed in roots, cauline leaf epidermal cells, stomata, stamen, pollen and around the base of siliques.

The catalysed reaction is a sterol + UDP-alpha-D-glucose = a sterol 3-beta-D-glucoside + UDP + H(+). Functionally, involved in the biosynthesis of sterol glucosides. Catalyzes the synthesis of steryl glycosides (SGs) and acyl steryl glycosides (ASGs) which are the most abundant sterol derivatives in higher plants. Can act on several sterols like sitosterol, campesterol and stigmasterol. Both UGT80A2 and UGT80B1 are required for the normal production of SGs and ASGs in seeds. The chain is Sterol 3-beta-glucosyltransferase UGT80A2 (UGT80A2) from Arabidopsis thaliana (Mouse-ear cress).